The sequence spans 34 residues: U2-theraphotoxin-Bs1a (34 aa).

3 disulfides stabilise this stretch: Cys-2/Cys-16, Cys-9/Cys-21, and Cys-15/Cys-28.

As to expression, expressed by the venom gland.

It localises to the secreted. The sequence is that of U2-theraphotoxin-Bs1a from Brachypelma smithi (Mexican red knee tarantula).